The primary structure comprises 146 residues: MLSFQHTKILPYKPKKLFDLVWDIKSYPQFLPWCAAARIISENNQEVISELVIQLKGLSEKYNSRVINTITDNGIYLIDTVAISGPFEYLKSTWQFIPHSTGTELKFFINFKMTSVILDKLIGSYFTIATEKMILAFEKRAKEVIK.

Belongs to the ribosome association toxin RatA family.

Its function is as follows. Toxic component of a type II toxin-antitoxin (TA) system. Binds to 50S ribosomal subunits, preventing them from associating with 30S subunits to form 70S ribosomes. Its antitoxin is unknown. The protein is Ribosome association toxin RatA (ratA) of Rickettsia prowazekii (strain Madrid E).